The primary structure comprises 546 residues: Probable Dol-P-Man:Man(7)GlcNAc(2)-PP-Dol alpha-1,6-mannosyltransferase (546 aa).

9 consecutive transmembrane segments (helical) span residues E5–Y25, F67–L87, F113–Y133, I166–I186, L200–S220, L258–I278, L283–W303, F305–F325, and L340–F360.

The protein belongs to the glycosyltransferase 22 family.

The protein resides in the endoplasmic reticulum membrane. It carries out the reaction an alpha-D-Man-(1-&gt;2)-alpha-D-Man-(1-&gt;2)-alpha-D-Man-(1-&gt;3)-[alpha-D-Man-(1-&gt;2)-alpha-D-Man-(1-&gt;3)-alpha-D-Man-(1-&gt;6)]-beta-D-Man-(1-&gt;4)-beta-D-GlcNAc-(1-&gt;4)-alpha-D-GlcNAc-diphospho-di-trans,poly-cis-dolichol + a di-trans,poly-cis-dolichyl beta-D-mannosyl phosphate = an alpha-D-Man-(1-&gt;2)-alpha-D-Man-(1-&gt;2)-alpha-D-Man-(1-&gt;3)-[alpha-D-Man-(1-&gt;2)-alpha-D-Man-(1-&gt;3)-[alpha-D-Man-(1-&gt;6)]-alpha-D-Man-(1-&gt;6)]-beta-D-Man-(1-&gt;4)-beta-D-GlcNAc-(1-&gt;4)-alpha-D-GlcNAc-diphospho-di-trans,poly-cis-dolichol + a di-trans,poly-cis-dolichyl phosphate + H(+). The protein operates within protein modification; protein glycosylation. Functionally, mannosyltransferase that operates in the biosynthetic pathway of dolichol-linked oligosaccharides, the glycan precursors employed in protein asparagine (N)-glycosylation. The assembly of dolichol-linked oligosaccharides begins on the cytosolic side of the endoplasmic reticulum membrane and finishes in its lumen. The sequential addition of sugars to dolichol pyrophosphate produces dolichol-linked oligosaccharides containing fourteen sugars, including two GlcNAcs, nine mannoses and three glucoses. Once assembled, the oligosaccharide is transferred from the lipid to nascent proteins by oligosaccharyltransferases. In the lumen of the endoplasmic reticulum, adds the eighth mannose residue in an alpha-1,6 linkage onto Man(7)GlcNAc(2)-PP-dolichol to produce Man(8)GlcNAc(2)-PP-dolichol. The polypeptide is Probable Dol-P-Man:Man(7)GlcNAc(2)-PP-Dol alpha-1,6-mannosyltransferase (alg12) (Schizosaccharomyces pombe (strain 972 / ATCC 24843) (Fission yeast)).